The sequence spans 502 residues: UDP-N-acetylmuramoylalanine--D-glutamate ligase (502 aa).

Gly-136–Thr-142 is a binding site for ATP.

Belongs to the MurCDEF family.

It is found in the cytoplasm. The catalysed reaction is UDP-N-acetyl-alpha-D-muramoyl-L-alanine + D-glutamate + ATP = UDP-N-acetyl-alpha-D-muramoyl-L-alanyl-D-glutamate + ADP + phosphate + H(+). It functions in the pathway cell wall biogenesis; peptidoglycan biosynthesis. In terms of biological role, cell wall formation. Catalyzes the addition of glutamate to the nucleotide precursor UDP-N-acetylmuramoyl-L-alanine (UMA). This Corynebacterium jeikeium (strain K411) protein is UDP-N-acetylmuramoylalanine--D-glutamate ligase.